A 319-amino-acid polypeptide reads, in one-letter code: Beta-ketoacyl-[acyl-carrier-protein] synthase III (319 aa).

Residues cysteine 113 and histidine 246 contribute to the active site. Residues 247 to 251 (QANRR) are ACP-binding. Residue asparagine 276 is part of the active site.

This sequence belongs to the thiolase-like superfamily. FabH family. In terms of assembly, homodimer.

The protein resides in the cytoplasm. The enzyme catalyses malonyl-[ACP] + acetyl-CoA + H(+) = 3-oxobutanoyl-[ACP] + CO2 + CoA. The protein operates within lipid metabolism; fatty acid biosynthesis. In terms of biological role, catalyzes the condensation reaction of fatty acid synthesis by the addition to an acyl acceptor of two carbons from malonyl-ACP. Catalyzes the first condensation reaction which initiates fatty acid synthesis and may therefore play a role in governing the total rate of fatty acid production. Possesses both acetoacetyl-ACP synthase and acetyl transacylase activities. Its substrate specificity determines the biosynthesis of branched-chain and/or straight-chain of fatty acids. This is Beta-ketoacyl-[acyl-carrier-protein] synthase III from Rhizorhabdus wittichii (strain DSM 6014 / CCUG 31198 / JCM 15750 / NBRC 105917 / EY 4224 / RW1) (Sphingomonas wittichii).